A 718-amino-acid polypeptide reads, in one-letter code: Ophiobolin F synthase oblA (718 aa).

The segment at Met1–Glu320 is (7Z)-ophiobola-7,19-dien-3-ol synthase. Mg(2+) is bound by residues Asp93 and Asp97. Substrate is bound at residue Asp93. A DDXXD 1 motif is present at residues Asp93–Asp97. Substrate contacts are provided by residues Arg180–Asp183, Asn224, Ser228–Glu232, and Arg311–Tyr312. The NSE/DTE motif lies at Asn224 to Glu232. The segment at Leu321–Val718 is geranylfarnesyl diphosphate synthase. The segment at Leu346–Thr391 is disordered. Over residues Gly349–Leu359 the composition is skewed to basic and acidic residues. Isopentenyl diphosphate contacts are provided by Lys429, Arg432, and His461. 2 residues coordinate Mg(2+): Asp468 and Asp472. The short motif at Asp468 to Asp472 is the DDXXD 2 element. Arg477 is a dimethylallyl diphosphate binding site. Arg478 contacts isopentenyl diphosphate. The dimethylallyl diphosphate site is built by Lys555, Thr556, Gln594, Asn601, Lys611, and Lys621.

This sequence in the N-terminal section; belongs to the terpene synthase family. In the C-terminal section; belongs to the FPP/GGPP synthase family. The cofactor is Mg(2+).

It carries out the reaction isopentenyl diphosphate + (2E,6E)-farnesyl diphosphate = (2E,6E,10E)-geranylgeranyl diphosphate + diphosphate. The catalysed reaction is isopentenyl diphosphate + (2E,6E,10E)-geranylgeranyl diphosphate = (2E,6E,10E,14E)-geranylfarnesyl diphosphate + diphosphate. It catalyses the reaction (2E,6E,10E,14E)-geranylfarnesyl diphosphate + H2O = ophiobolin F + diphosphate. Its pathway is secondary metabolite biosynthesis; terpenoid biosynthesis. Bifunctional sesterterpene synthase; part of the gene cluster that mediates the biosynthesis of the sesterterpenes ophiobolins, fungal phytotoxins with potential anti-cancer activities. The first step of the pathway is performed by the sesterterpene synthase oblA that possesses both prenyl transferase and terpene cyclase activity, converting isopentenyl diphosphate and dimethylallyl diphosphate into geranylfarnesyl diphosphate (GFPP) and further converting GFPP into ophiobolin F, respectively. Other sesterterpenoids (C(25) terpenoids) are found as minor products of oblA. It is expected that ophiobolin F is then oxidized to ophiobolin A via ophiobolin C and ophiobolin B intermediates by the combined action of the cytochrome P450 monooxygenase oblB and the FAD-dependent oxidoreductase oblC. Although oblB catalyzes multistep oxygenations at C5 and C21/C7 in a relatively efficient manner, it is unable to convert ophiobolin F to ophiobolin C and produces instead several unexpected derivatives. The polypeptide is Ophiobolin F synthase oblA (Aspergillus clavatus (strain ATCC 1007 / CBS 513.65 / DSM 816 / NCTC 3887 / NRRL 1 / QM 1276 / 107)).